A 91-amino-acid chain; its full sequence is uncharacterized protein (91 aa).

Its subcellular location is the plastid. The protein localises to the cyanelle. This is an uncharacterized protein from Cyanophora paradoxa.